A 287-amino-acid polypeptide reads, in one-letter code: Ciliary microtubule inner protein 6 (287 aa).

2 stretches are compositionally biased toward basic and acidic residues: residues 1–15 and 25–34; these read MEEK…KIED and EEIKHEEKPG. Positions 1 to 42 are disordered; the sequence is MEEKEDKHQQHKIEDAAITYVSENEEIKHEEKPGKSIHHSKS. The tract at residues 128 to 160 is mn 1; the sequence is GIVPLASPGTSAELQNNFIEYISFIHQYDARKT. The disordered stretch occupies residues 179–287; sequence KPGSRPTVPK…PLNPPIKKSE (109 aa). 2 stretches are compositionally biased toward basic and acidic residues: residues 203 to 212 and 232 to 245; these read EQSKKTEKGN and LEPK…DVRQ. The mn 2 stretch occupies residues 213–246; that stretch reads SAESRMISPGLCQQNSQELLEPKTHLSETDVRQA.

Its subcellular location is the cell projection. The protein localises to the cilium. The chain is Ciliary microtubule inner protein 6 from Homo sapiens (Human).